The primary structure comprises 70 residues: Large ribosomal subunit protein eL38 (70 aa).

Belongs to the eukaryotic ribosomal protein eL38 family.

The protein is Large ribosomal subunit protein eL38 (RpL38) of Bombyx mori (Silk moth).